We begin with the raw amino-acid sequence, 274 residues long: 4-diphosphocytidyl-2-C-methyl-D-erythritol kinase (274 aa).

Lys9 is a catalytic residue. 91 to 101 (PAGAGLGGGSS) is a binding site for ATP. Residue Asp133 is part of the active site.

It belongs to the GHMP kinase family. IspE subfamily.

The enzyme catalyses 4-CDP-2-C-methyl-D-erythritol + ATP = 4-CDP-2-C-methyl-D-erythritol 2-phosphate + ADP + H(+). Its pathway is isoprenoid biosynthesis; isopentenyl diphosphate biosynthesis via DXP pathway; isopentenyl diphosphate from 1-deoxy-D-xylulose 5-phosphate: step 3/6. In terms of biological role, catalyzes the phosphorylation of the position 2 hydroxy group of 4-diphosphocytidyl-2C-methyl-D-erythritol. The chain is 4-diphosphocytidyl-2-C-methyl-D-erythritol kinase from Persephonella marina (strain DSM 14350 / EX-H1).